Reading from the N-terminus, the 156-residue chain is ATP synthase subunit b (156 aa).

The chain crosses the membrane as a helical span at residues 7–27 (LFVQAIVFLILVWFTMQFVWP).

Belongs to the ATPase B chain family. As to quaternary structure, F-type ATPases have 2 components, F(1) - the catalytic core - and F(0) - the membrane proton channel. F(1) has five subunits: alpha(3), beta(3), gamma(1), delta(1), epsilon(1). F(0) has three main subunits: a(1), b(2) and c(10-14). The alpha and beta chains form an alternating ring which encloses part of the gamma chain. F(1) is attached to F(0) by a central stalk formed by the gamma and epsilon chains, while a peripheral stalk is formed by the delta and b chains.

It is found in the cell inner membrane. Its function is as follows. F(1)F(0) ATP synthase produces ATP from ADP in the presence of a proton or sodium gradient. F-type ATPases consist of two structural domains, F(1) containing the extramembraneous catalytic core and F(0) containing the membrane proton channel, linked together by a central stalk and a peripheral stalk. During catalysis, ATP synthesis in the catalytic domain of F(1) is coupled via a rotary mechanism of the central stalk subunits to proton translocation. Functionally, component of the F(0) channel, it forms part of the peripheral stalk, linking F(1) to F(0). The chain is ATP synthase subunit b from Verminephrobacter eiseniae (strain EF01-2).